Reading from the N-terminus, the 240-residue chain is UDP-2,3-diacylglucosamine hydrolase (240 aa).

Aspartate 7, histidine 9, aspartate 40, asparagine 78, and histidine 113 together coordinate Mn(2+). 78-79 serves as a coordination point for substrate; the sequence is NR. Substrate is bound by residues aspartate 121, serine 159, lysine 166, and histidine 194. Mn(2+)-binding residues include histidine 194 and histidine 196.

This sequence belongs to the LpxH family. The cofactor is Mn(2+).

It localises to the cell inner membrane. The catalysed reaction is UDP-2-N,3-O-bis[(3R)-3-hydroxytetradecanoyl]-alpha-D-glucosamine + H2O = 2-N,3-O-bis[(3R)-3-hydroxytetradecanoyl]-alpha-D-glucosaminyl 1-phosphate + UMP + 2 H(+). It functions in the pathway glycolipid biosynthesis; lipid IV(A) biosynthesis; lipid IV(A) from (3R)-3-hydroxytetradecanoyl-[acyl-carrier-protein] and UDP-N-acetyl-alpha-D-glucosamine: step 4/6. Hydrolyzes the pyrophosphate bond of UDP-2,3-diacylglucosamine to yield 2,3-diacylglucosamine 1-phosphate (lipid X) and UMP by catalyzing the attack of water at the alpha-P atom. Involved in the biosynthesis of lipid A, a phosphorylated glycolipid that anchors the lipopolysaccharide to the outer membrane of the cell. The sequence is that of UDP-2,3-diacylglucosamine hydrolase from Pseudomonas putida (strain ATCC 700007 / DSM 6899 / JCM 31910 / BCRC 17059 / LMG 24140 / F1).